Reading from the N-terminus, the 344-residue chain is KRR1 small subunit processome component homolog (344 aa).

The KH domain occupies 125–193; it reads DIIKIGNLVH…VRDIVLETMN (69 aa). Residues 232–245 show a composition bias toward basic residues; it reads NISKRKQPKVKKQK. Disordered regions lie at residues 232-260 and 273-326; these read NISK…ESKV and QEQK…TKVD. Residues 270 to 295 adopt a coiled-coil conformation; it reads FLNQEQKQAKRNQGRTEKQKEAAKRQ. 2 stretches are compositionally biased toward basic and acidic residues: residues 283–302 and 315–326; these read GRTE…RNKD and RKKEDGSSTKVD.

The protein belongs to the KRR1 family. In terms of assembly, monomer. Component of the ribosomal small subunit (SSU) processome.

It localises to the nucleus. The protein resides in the nucleolus. Its function is as follows. Required for 40S ribosome biogenesis. Involved in nucleolar processing of pre-18S ribosomal RNA and ribosome assembly. Binds to RNA. Required for female germline development, cell viability during eye development and for survival of dividing cells and epithelial cells during early wing disk development. This is KRR1 small subunit processome component homolog from Drosophila yakuba (Fruit fly).